We begin with the raw amino-acid sequence, 265 residues long: Hydroxyethylthiazole kinase (265 aa).

Met-43 is a binding site for substrate. 2 residues coordinate ATP: Lys-118 and Thr-165. Residue Gly-192 participates in substrate binding.

This sequence belongs to the Thz kinase family. It depends on Mg(2+) as a cofactor.

It carries out the reaction 5-(2-hydroxyethyl)-4-methylthiazole + ATP = 4-methyl-5-(2-phosphooxyethyl)-thiazole + ADP + H(+). It participates in cofactor biosynthesis; thiamine diphosphate biosynthesis; 4-methyl-5-(2-phosphoethyl)-thiazole from 5-(2-hydroxyethyl)-4-methylthiazole: step 1/1. Functionally, catalyzes the phosphorylation of the hydroxyl group of 4-methyl-5-beta-hydroxyethylthiazole (THZ). The chain is Hydroxyethylthiazole kinase from Pyrococcus horikoshii (strain ATCC 700860 / DSM 12428 / JCM 9974 / NBRC 100139 / OT-3).